Here is a 56-residue protein sequence, read N- to C-terminus: Serine protease inhibitor Kazal-type 1 (56 aa).

Residues 3 to 56 enclose the Kazal-like domain; sequence PQREATCTSEVSGCPKIYNPVCGTDGITYSNECVLCSENKKRQTPVLIQKSGPC. Cystine bridges form between Cys9/Cys38, Cys16/Cys35, and Cys24/Cys56.

Its subcellular location is the secreted. In terms of biological role, serine protease inhibitor which exhibits anti-trypsin activity. In the pancreas, protects against trypsin-catalyzed premature activation of zymogens. In the male reproductive tract, binds to sperm heads where it modulates sperm capacitance by inhibiting calcium uptake and nitrogen oxide (NO) production. The polypeptide is Serine protease inhibitor Kazal-type 1 (SPINK1) (Sus scrofa (Pig)).